Consider the following 139-residue polypeptide: uncharacterized protein (139 aa).

The HTH cro/C1-type domain maps to 19–73 (IRLRRTMLGMSQEKLGESLGITFQQIQKYEKGTNRVGASRLQNISQILNVPVSFF). A DNA-binding region (H-T-H motif) is located at residues 30–49 (QEKLGESLGITFQQIQKYEK).

This is an uncharacterized protein from Rhizobium meliloti (strain 1021) (Ensifer meliloti).